A 268-amino-acid polypeptide reads, in one-letter code: Type II methyltransferase M2.DpnII (268 aa).

It belongs to the N(4)/N(6)-methyltransferase family. In terms of assembly, homodimer.

The catalysed reaction is a 2'-deoxyadenosine in DNA + S-adenosyl-L-methionine = an N(6)-methyl-2'-deoxyadenosine in DNA + S-adenosyl-L-homocysteine + H(+). Functionally, a beta subtype methylase that recognizes the single- or double-stranded sequence 5'-GATC-3', methylates A-2 on one or both strands (respectively), and protects the DNA from cleavage by the DpnII endonuclease. Further methylates DNA that is already methylated at 5'-GATC-3' sites. Essential for establishment of a previously unmethylated plasmid transformed into the cell as single-stranded DNA, enhances plasmid transfer to DpnII-containing strains of Streptococcus pneumoniae. This Streptococcus pneumoniae protein is Type II methyltransferase M2.DpnII.